A 157-amino-acid polypeptide reads, in one-letter code: Large ribosomal subunit protein eL24 (157 aa).

The interval 95 to 157 (NQKPEVRKAQ…VSAPRVGGKR (63 aa)) is disordered. Positions 96–117 (QKPEVRKAQREQAIRAAKEAKK) are enriched in basic and acidic residues. The segment covering 123 to 145 (KKQTTQSSKAPAKSAQKQKIAKP) has biased composition (low complexity).

The protein belongs to the eukaryotic ribosomal protein eL24 family. In terms of assembly, component of the large ribosomal subunit.

The protein localises to the cytoplasm. Its function is as follows. Component of the large ribosomal subunit. The ribosome is a large ribonucleoprotein complex responsible for the synthesis of proteins in the cell. Plays an essential role in early embryonic development. The polypeptide is Large ribosomal subunit protein eL24 (rpl24) (Danio rerio (Zebrafish)).